A 1247-amino-acid chain; its full sequence is Leucine-rich repeat-containing protein 53 (1247 aa).

LRR repeat units follow at residues 34–55 (TTRVLIITDGYLSSIESTNLSL), 58–79 (NLALLSLSRNGIEDVQEDALHG), 82–102 (MLRTLLLEHNQISSSSLTDHT), 108–129 (SLQVLVLSNNALRTLRGSWFRN), 132–153 (GLTRLQLDGNQITNLTDSSFGG), 158–179 (SLRYLDLSNNFISYIGKDAFRP), and 182–203 (QLQEVDLSRNRLAHMPDVFTPL). In terms of domain architecture, LRRCT spans 214–271 (NQWSCTCDLHPLARFLRNYIKSSAHTLRNAKDLNCQPSTAAVAAAQSVLRLSETNCDS). Residues 294-314 (LLTVLGFAGAVGLTCLGLVVF) form a helical membrane-spanning segment. Disordered regions lie at residues 828-866 (SAGHIPDGNTSKLPQPTPTDAEHRHSHSQFSTEQMEDAT), 887-927 (VLPF…SPRN), and 1223-1247 (ENSAPKPVLYPPSAEYATTSPLETE). 2 stretches are compositionally biased toward polar residues: residues 898–927 (DQGTTESTEHMGQNVSKTSELNQFSLSPRN) and 1238–1247 (YATTSPLETE).

It localises to the membrane. The sequence is that of Leucine-rich repeat-containing protein 53 (LRRC53) from Homo sapiens (Human).